A 147-amino-acid polypeptide reads, in one-letter code: Cyanate hydratase (147 aa).

Catalysis depends on residues R88, E91, and S114.

Belongs to the cyanase family.

The catalysed reaction is cyanate + hydrogencarbonate + 3 H(+) = NH4(+) + 2 CO2. In terms of biological role, catalyzes the reaction of cyanate with bicarbonate to produce ammonia and carbon dioxide. The polypeptide is Cyanate hydratase (Dechloromonas aromatica (strain RCB)).